Consider the following 163-residue polypeptide: Neurotrophin-3 (163 aa).

The N-terminal stretch at 1-3 (IQS) is a signal peptide. Residues 4–119 (TSMDQGILTE…VLNRTSRRKR (116 aa)) constitute a propeptide that is removed on maturation. N-linked (GlcNAc...) asparagine glycosylation is present at Asn-112. Residues 114–133 (TSRRKREGKSHRGEYSVCDS) form a disordered region. Over residues 123–133 (SHRGEYSVCDS) the composition is skewed to basic and acidic residues.

It belongs to the NGF-beta family.

It localises to the secreted. Functionally, seems to promote the survival of visceral and proprioceptive sensory neurons. This Lichanura trivirgata (Rosy boa) protein is Neurotrophin-3 (NTF3).